The following is a 1023-amino-acid chain: Sodium/potassium-transporting ATPase subunit alpha-1 (1023 aa).

A propeptide spanning residues 1-5 (MGYGA) is cleaved from the precursor. Residues 1-11 (MGYGAGRDKYE) are compositionally biased toward basic and acidic residues. The segment at 1–34 (MGYGAGRDKYEPAATSEHGGKKGKGKGKDRDMEE) is disordered. Topologically, residues 6–87 (GRDKYEPAAT…NALTPPPTTP (82 aa)) are cytoplasmic. A Phosphothreonine; by PKC modification is found at T15. Phosphoserine; by PKC is present on S16. The segment at 82–84 (PPP) is interaction with phosphoinositide-3 kinase. A helical membrane pass occupies residues 88–108 (EWVKFCRQLFGGFSMLLWIGA). The Extracellular portion of the chain corresponds to 109 to 131 (ILCFLAYGIRKASDLEPDNDNLY). The chain crosses the membrane as a helical span at residues 132 to 152 (LGVVLSAVVIITGCFSYYQEA). The Cytoplasmic segment spans residues 153 to 288 (KSSRIMESFK…GGQTPIAVEI (136 aa)). The segment at 215–235 (NSSLTGESEPQTRSPDFTNEN) is disordered. Residues 289-308 (GHFIHIITGVAVFLGVSFFI) traverse the membrane as a helical segment. The Extracellular segment spans residues 309–320 (LSLILHYTWLEA). A helical transmembrane segment spans residues 321–338 (VIFLIGIIVANVPEGLLA). Topologically, residues 339–772 (TVTVCLTLTA…EEGRLIFDNL (434 aa)) are cytoplasmic. D376 functions as the 4-aspartylphosphate intermediate in the catalytic mechanism. K487 serves as a coordination point for ATP. 2 residues coordinate Mg(2+): D717 and D721. A helical membrane pass occupies residues 773–792 (KKSIAYTLTSNIPEITPFLI). The Extracellular portion of the chain corresponds to 793-802 (FIIADIPLPL). The chain crosses the membrane as a helical span at residues 803 to 823 (GTVTILCIDLGTDMVPAISLA). At 824 to 843 (YEQAESDIMKRQPRNPKKDK) the chain is on the cytoplasmic side. A helical membrane pass occupies residues 844–866 (LVNERLISMAYGQIGMIQALGGF). Over 867 to 918 (FAYFVILAENGFLPSTLLGIRVAWEDRYVNDVEDSYGQQWTYEQRKIVEFTC) the chain is Extracellular. Residues 919 to 938 (HTAFFVSIVVVQWADLIICK) traverse the membrane as a helical segment. The Cytoplasmic segment spans residues 939–951 (TRRNSVFQQGMKN). S943 carries the phosphoserine; by PKA modification. Residues 952 to 970 (KILIFGLFEETALAAFLSY) traverse the membrane as a helical segment. Residues 971–985 (CPGMDVALRMYPLKP) are Extracellular-facing. A helical transmembrane segment spans residues 986 to 1006 (TWWFCAFPYSLLIFIYDEVRK). The Cytoplasmic segment spans residues 1007–1023 (LILRRSPGGWVEKETYY).

The protein belongs to the cation transport ATPase (P-type) (TC 3.A.3) family. Type IIC subfamily. The sodium/potassium-transporting ATPase is composed of a catalytic alpha subunit, an auxiliary non-catalytic beta subunit and an additional regulatory subunit. In terms of tissue distribution, mainly expressed in kidney. Found in bladder, colon, eye, and testis. Found in low levels in brain, heart, spleen and liver.

It is found in the cell membrane. The protein resides in the sarcolemma. It carries out the reaction K(+)(out) + Na(+)(in) + ATP + H2O = K(+)(in) + Na(+)(out) + ADP + phosphate + H(+). With respect to regulation, this alpha subunit is resistant to ouabain. In terms of biological role, this is the catalytic component of the active enzyme, which catalyzes the hydrolysis of ATP coupled with the exchange of sodium and potassium ions across the plasma membrane. This action creates the electrochemical gradient of sodium and potassium ions, providing the energy for active transport of various nutrients. The sequence is that of Sodium/potassium-transporting ATPase subunit alpha-1 (ATP1A1) from Rhinella marina (Cane toad).